The chain runs to 37 residues: Large ribosomal subunit protein bL36 (37 aa).

It belongs to the bacterial ribosomal protein bL36 family.

This Koribacter versatilis (strain Ellin345) protein is Large ribosomal subunit protein bL36.